A 957-amino-acid chain; its full sequence is Glycine dehydrogenase (decarboxylating) (957 aa).

N6-(pyridoxal phosphate)lysine is present on lysine 708.

Belongs to the GcvP family. As to quaternary structure, the glycine cleavage system is composed of four proteins: P, T, L and H. Pyridoxal 5'-phosphate serves as cofactor.

The enzyme catalyses N(6)-[(R)-lipoyl]-L-lysyl-[glycine-cleavage complex H protein] + glycine + H(+) = N(6)-[(R)-S(8)-aminomethyldihydrolipoyl]-L-lysyl-[glycine-cleavage complex H protein] + CO2. The glycine cleavage system catalyzes the degradation of glycine. The P protein binds the alpha-amino group of glycine through its pyridoxal phosphate cofactor; CO(2) is released and the remaining methylamine moiety is then transferred to the lipoamide cofactor of the H protein. This chain is Glycine dehydrogenase (decarboxylating), found in Escherichia coli O7:K1 (strain IAI39 / ExPEC).